The sequence spans 93 residues: Molybdopterin synthase sulfur carrier subunit (93 aa).

Gly-93 carries the post-translational modification 1-thioglycine; alternate. The residue at position 93 (Gly-93) is a Glycyl adenylate; alternate.

Belongs to the MoaD family. MOCS2A subfamily. In terms of assembly, heterotetramer; composed of 2 small (MOCS2A) and 2 large (MOCS2B) subunits. C-terminal thiocarboxylation occurs in 2 steps, it is first acyl-adenylated (-COAMP) via the hesA/moeB/thiF part of UBA4, then thiocarboxylated (-COSH) via the rhodanese domain of UBA4.

It localises to the cytoplasm. It participates in cofactor biosynthesis; molybdopterin biosynthesis. In terms of biological role, acts as a sulfur carrier required for molybdopterin biosynthesis. Component of the molybdopterin synthase complex that catalyzes the conversion of precursor Z into molybdopterin by mediating the incorporation of 2 sulfur atoms into precursor Z to generate a dithiolene group. In the complex, serves as sulfur donor by being thiocarboxylated (-COSH) at its C-terminus by UBA4. After interaction with MOCS2B, the sulfur is then transferred to precursor Z to form molybdopterin. The sequence is that of Molybdopterin synthase sulfur carrier subunit from Mycosarcoma maydis (Corn smut fungus).